The sequence spans 565 residues: MAPRTQKSTSGTPGGSGTPGPDEGPQISPGGTYGLEDVVVGCKAFVQKPDVVTGEMEERKAEILSIREKPKPRLTKKQQAELADKPAPTLEETLEYYVHYCEFNKRLDEWVSGTRLITSRELEWPKKEVTSDKTKRKVIRAGSGATTPSTPLTPTGKGYRGAGASNLLKKAAAQAAKNVQGESGLETPQKRKADSGDTSTAQSIRADSIDADADGEDDENGAVVAMEMLGGNDQQEKDDVATESNGGLTASLNANQGQETFSKKQEIEKLRTSGSMTQSVSEVARVKNLNKIQMGKSEVETWYFSPYPLEYAHIDTLYICEMCLSYFPSPFTLKRHRSKCTLLHPPGNEIYRHEDISFFEIDGRLQRTWCRNLCLLSKCFLDHKTLYYDVDPFLYYCMVKRDDLGCHLLGYFSKEKDSAENYNVACILTLPQHQRAGYGKLLIEFSYELTKIEGKLGSPEKPLSDLGLLSYRAYWAEIIVELLLKTEDEISIEEIAQKTAFTHADILHTCMALNMLKQYQGKHMIVLSDLIISKYTAKRPRKRINPQKLHWTAKNWHRSQLNFGW.

The disordered stretch occupies residues 1–33 (MAPRTQKSTSGTPGGSGTPGPDEGPQISPGGTY). The Tudor-knot domain occupies 38–117 (VVVGCKAFVQ…DEWVSGTRLI (80 aa)). Residues 173–217 (AQAAKNVQGESGLETPQKRKADSGDTSTAQSIRADSIDADADGED) are disordered. The MYST-type HAT domain occupies 284–553 (ARVKNLNKIQ…INPQKLHWTA (270 aa)). A C2HC MYST-type zinc finger spans residues 317–342 (LYICEMCLSYFPSPFTLKRHRSKCTL). The ESA1-RPD3 motif signature appears at 367 to 388 (RTWCRNLCLLSKCFLDHKTLYY). Lysine 384 carries the N6-acetyllysine; by autocatalysis modification. Acetyl-CoA is bound by residues 425-429 (ACILT) and 434-440 (QRAGYGK). Glutamate 460 functions as the Proton donor/acceptor in the catalytic mechanism. Serine 464 serves as a coordination point for acetyl-CoA.

Belongs to the MYST (SAS/MOZ) family. In terms of assembly, component of the NuA4 histone acetyltransferase complex. In terms of processing, autoacetylation at Lys-384 is required for proper function.

It localises to the nucleus. The protein localises to the chromosome. It catalyses the reaction L-lysyl-[histone] + acetyl-CoA = N(6)-acetyl-L-lysyl-[histone] + CoA + H(+). The enzyme catalyses L-lysyl-[protein] + acetyl-CoA = N(6)-acetyl-L-lysyl-[protein] + CoA + H(+). The catalysed reaction is 2-hydroxyisobutanoyl-CoA + L-lysyl-[protein] = N(6)-(2-hydroxyisobutanoyl)-L-lysyl-[protein] + CoA + H(+). It carries out the reaction (2E)-butenoyl-CoA + L-lysyl-[protein] = N(6)-(2E)-butenoyl-L-lysyl-[protein] + CoA + H(+). Functionally, catalytic component of the NuA4 histone acetyltransferase (HAT) complex which is involved in epigenetic transcriptional activation of selected genes principally by acetylation of nucleosomal histones H4, H3, H2B, H2A and H2A variant H2A.Z. Acetylates histone H4 to form H4K5ac, H4K8ac, H4K12ac and H4K16ac, histone H3 to form H3K14ac, and histone H2A to form H2AK4ac and H2AK7ac. The NuA4 complex is involved in the DNA damage response and is required for chromosome segregation. The NuA4 complex plays a direct role in repair of DNA double-strand breaks (DSBs) through homologous recombination. Recruitment to promoters depends on H3K4me. Also acetylates non-histone proteins. In addition to protein acetyltransferase, can use different acyl-CoA substrates, such as 2-hydroxyisobutanoyl-CoA (2-hydroxyisobutyryl-CoA) or (2E)-butenoyl-CoA (crotonyl-CoA), and is able to mediate protein 2-hydroxyisobutyrylation and crotonylation, respectively. The protein is Histone acetyltransferase ESA1 (ESA1) of Mycosarcoma maydis (Corn smut fungus).